The following is a 300-amino-acid chain: Jacalin-related lectin 33 (300 aa).

The segment at 1 to 20 (MAQKVEAGGGAGGASWDDGV) is disordered. Ala-2 is subject to N-acetylalanine. 2 consecutive Jacalin-type lectin domains span residues 2 to 146 (AQKV…YFAT) and 154 to 297 (AKKL…HVMP).

It belongs to the jacalin lectin family. As to quaternary structure, component of the PYK10 complex, at least composed of PYK10/BGLU23, BGLU21, BGLU22, JAL22, JAL23, PBP1/JAL30, PBP2/JAL31, JAL32, JAL33, JAL34, JAL35, GLL22 and GLL23.

In terms of biological role, sugar-binding protein showing significant affinity for (Glc alpha(1-4)Glc)(3) maltohexaose, (Glc alpha(1-6)Glc)(3) isomaltohexaose, Gal alpha(1-4)Gal beta(1-4)Glc, GalNAc alpha(1-3)(Fuc alpha(1-2)) and Gal beta(1-3)(Fuc alpha(1-4))GlcNAc beta(1-3)Gal beta(1-4)Glc. The sequence is that of Jacalin-related lectin 33 (JAL33) from Arabidopsis thaliana (Mouse-ear cress).